A 466-amino-acid chain; its full sequence is Ribulose bisphosphate carboxylase large chain (466 aa).

Lys-5 is subject to N6,N6,N6-trimethyllysine. Substrate is bound by residues Asn-114 and Thr-164. Lys-166 functions as the Proton acceptor in the catalytic mechanism. Residue Lys-168 coordinates substrate. The Mg(2+) site is built by Lys-192, Asp-194, and Glu-195. Lys-192 is modified (N6-carboxylysine). Residue His-285 is the Proton acceptor of the active site. Arg-286, His-318, and Ser-370 together coordinate substrate.

This sequence belongs to the RuBisCO large chain family. Type I subfamily. In terms of assembly, heterohexadecamer of 8 large chains and 8 small chains; disulfide-linked. The disulfide link is formed within the large subunit homodimers. It depends on Mg(2+) as a cofactor. Post-translationally, the disulfide bond which can form in the large chain dimeric partners within the hexadecamer appears to be associated with oxidative stress and protein turnover.

It localises to the plastid. The protein localises to the chloroplast. The enzyme catalyses 2 (2R)-3-phosphoglycerate + 2 H(+) = D-ribulose 1,5-bisphosphate + CO2 + H2O. It carries out the reaction D-ribulose 1,5-bisphosphate + O2 = 2-phosphoglycolate + (2R)-3-phosphoglycerate + 2 H(+). In terms of biological role, ruBisCO catalyzes two reactions: the carboxylation of D-ribulose 1,5-bisphosphate, the primary event in carbon dioxide fixation, as well as the oxidative fragmentation of the pentose substrate in the photorespiration process. Both reactions occur simultaneously and in competition at the same active site. This Betula nigra (River birch) protein is Ribulose bisphosphate carboxylase large chain.